The chain runs to 56 residues: Large ribosomal subunit protein bL32 (56 aa).

Positions 1–56 (MAVPARRTSKAKKNKRRTHKGLTTPGLSRDSETGEYRMSHRISPDGTYKGRTIIEK) are disordered. Residues 7-20 (RTSKAKKNKRRTHK) show a composition bias toward basic residues. Positions 29–38 (RDSETGEYRM) are enriched in basic and acidic residues.

Belongs to the bacterial ribosomal protein bL32 family.

The sequence is that of Large ribosomal subunit protein bL32 from Listeria monocytogenes serotype 4a (strain HCC23).